Consider the following 336-residue polypeptide: Palmitoyltransferase SWF1 (336 aa).

Topologically, residues 1 to 2 (MS) are lumenal. A helical transmembrane segment spans residues 3 to 23 (WNLLFVLLIGFVVLILLSPVF). The Cytoplasmic segment spans residues 24-50 (KSTWPFSTFYRNVFQPFLVDDQKYRWK). Residues 51-71 (LHLVPLFYTSIYLYLVYTYHM) form a helical membrane-spanning segment. Residues 72 to 86 (RVESTIKNELFLLER) are Lumenal-facing. The chain crosses the membrane as a helical span at residues 87-107 (ILIVPIIILPPVALGILAMVS). Over 108 to 179 (RAEDSKDHKS…CIGKGNYLQF (72 aa)) the chain is Cytoplasmic. Positions 134 to 184 (IKCSTCRIVKPARSKHCSICNRCVLVADHHCIWINNCIGKGNYLQFYLFLI) constitute a DHHC domain. Residues 180–200 (YLFLISNIFSMCYAFLRLWYI) traverse the membrane as a helical segment. At 201–216 (SLNSTSTLPRAVLTLT) the chain is on the lumenal side. Residues 217-237 (ILCGCFTIICAIFTYLQLAIV) form a helical membrane-spanning segment. Topologically, residues 238 to 336 (KEGMTTNEQD…TFLANLTDLI (99 aa)) are cytoplasmic.

It belongs to the DHHC palmitoyltransferase family. SWF1 subfamily.

The protein localises to the endoplasmic reticulum membrane. It carries out the reaction L-cysteinyl-[protein] + hexadecanoyl-CoA = S-hexadecanoyl-L-cysteinyl-[protein] + CoA. Palmitoyltransferase that targets several endosomal SNAREs. Palmitoylates the SNAREs SNC1, SNC2, SYN8 and TLG1, at cysteine residues close to the cytoplasmic end of their transmembrane domain. May have a role in the cellular quality control of transmembrane domain-containing proteins. This Saccharomyces cerevisiae (strain ATCC 204508 / S288c) (Baker's yeast) protein is Palmitoyltransferase SWF1 (SWF1).